Reading from the N-terminus, the 166-residue chain is Protein BioX (166 aa).

A run of 5 helical transmembrane segments spans residues Ile12 to Pro32, Gly33 to Lys53, Tyr55 to Leu75, Val87 to Ile107, and Ala117 to Ile137.

The protein localises to the cell membrane. Functionally, does not seem to be a permease of pimelate. Its role in biotin synthesis is not clear. The polypeptide is Protein BioX (bioX) (Lysinibacillus sphaericus (Bacillus sphaericus)).